Reading from the N-terminus, the 173-residue chain is Alpha-crystallin A chain (173 aa).

Met1 bears the N-acetylmethionine mark. The tract at residues 1–63 is required for complex formation with BFSP1 and BFSP2; it reads MDITIQHPWF…RTVLESGISE (63 aa). Gln6 is subject to Deamidated glutamine; partial. Phosphoserine is present on Ser45. Deamidated glutamine; partial is present on Gln50. In terms of domain architecture, sHSP spans 52-164; that stretch reads LFRTVLESGI…SDRSIPVSRE (113 aa). N6-acetyllysine is present on residues Lys70 and Lys99. His100, Glu102, and His107 together coordinate Zn(2+). A Phosphoserine modification is found at Ser122. Residue Asn123 is modified to Deamidated asparagine; partial. Over residues 146-167 the composition is skewed to basic and acidic residues; that stretch reads IHSDMDASHSDRSIPVSREEKP. The disordered stretch occupies residues 146–173; the sequence is IHSDMDASHSDRSIPVSREEKPTLAPSS. Zn(2+) is bound at residue His154. O-linked (GlcNAc) serine glycosylation is present at Ser162.

It belongs to the small heat shock protein (HSP20) family. Heteromer composed of three CRYAA and one CRYAB subunits. Inter-subunit bridging via zinc ions enhances stability, which is crucial as there is no protein turn over in the lens. Can also form homodimers and homotetramers (dimers of dimers) which serve as the building blocks of homooligomers. Within homooligomers, the zinc-binding motif is created from residues of 3 different molecules. His-100 and Glu-102 from one molecule are ligands of the zinc ion, and His-107 and His-154 residues from additional molecules complete the site with tetrahedral coordination geometry. Part of a complex required for lens intermediate filament formation composed of BFSP1, BFSP2 and CRYAA. Post-translationally, acetylation at Lys-70 may increase chaperone activity. In terms of processing, undergoes age-dependent proteolytical cleavage at the C-terminus.

The protein resides in the cytoplasm. It localises to the nucleus. Contributes to the transparency and refractive index of the lens. Acts as a chaperone, preventing aggregation of various proteins under a wide range of stress conditions. Required for the correct formation of lens intermediate filaments as part of a complex composed of BFSP1, BFSP2 and CRYAA. In Osphranter rufus (Red kangaroo), this protein is Alpha-crystallin A chain (CRYAA).